Consider the following 883-residue polypeptide: MSQQTTIRKLAELVNTPVEKLLEQLAGAGMKFSGPDQVVTSSEKVKLLGFLRRSHGKPEQAPEETDQSAKKITLNRRKQQEVTVNSGRSKTTVNVEVRQKRTYVKDGARAMTPDEERADILRKLEESRARNLAEQQALAEKDRLRDEAIVRAREEEVAAKERAEAEKKAAEEAAAAAKAAEALAASKPKVRAPIDETAPRPPRAPAAAPAAPRGAPPPPPRSDDRNNRSAPRNERGPGDRFAGQMHLSAADRARRGNSNNSNNRGRPGGRNQSGGRRDMSRGGNNAGPHAFERPTAPVVREVAIGETITVADLAQKLALKGGEVVKALFKMGVMATITQSIDHDTAALVTEELGHKAIRANDNDAEDALLASAGENQGEAVQRPPVVTIMGHVDHGKTSLLDYIRRTKVATGEAGGITQHIGAYHVDTPKGVISFLDTPGHAAFTSMRARGAKLTDIVVLVVAADDGVMPQTKEAIQHARSAGVPLIVAINKIDKSGADPMRVKNELLSEQVVAEDFGGDIQMVEISAKTGLGIDDLLDAVSVQAELLELKAVDEGRANGVVIESSLDKGRGPVATVLVQQGRLKKGDYLVCGIQYGRVRALFDETGKQPEFAGPSIPVQVLGLSGVPEAGDDFVVVDDERLAKDVAQQRETKRRESRLVATAGSRMEDIMATLGKGEGQQVLNLVIKADVQGSVQALSQALVALSNEDIRINVIHSGVGGITESDANSAAASKATVIGFNVRADASARRIIESNGVDLRYFSIIYDVIDQVKQVASGLLGVEIREEIIGIAEVRDVFRSSKLGAVAGSMVIEGVVKRNKPIRVLRDSVVIFEGELESLRRFKENVEEVRNGTECGIAVKAYNDVKPGDQIECFERIEVPRTL.

Disordered regions lie at residues 53-90 (RSHG…GRSK) and 171-294 (EEAA…FERP). The segment covering 81–90 (EVTVNSGRSK) has biased composition (polar residues). Residues 172 to 185 (EAAAAAKAAEALAA) are compositionally biased toward low complexity. A compositionally biased stretch (basic and acidic residues) spans 221-238 (RSDDRNNRSAPRNERGPG). The segment covering 256–265 (GNSNNSNNRG) has biased composition (low complexity). Positions 382–551 (QRPPVVTIMG…SVQAELLELK (170 aa)) constitute a tr-type G domain. A G1 region spans residues 391-398 (GHVDHGKT). 391–398 (GHVDHGKT) provides a ligand contact to GTP. Residues 416–420 (GITQH) are G2. The segment at 437–440 (DTPG) is G3. GTP is bound by residues 437 to 441 (DTPGH) and 491 to 494 (NKID). The interval 491–494 (NKID) is G4. The G5 stretch occupies residues 527-529 (SAK).

This sequence belongs to the TRAFAC class translation factor GTPase superfamily. Classic translation factor GTPase family. IF-2 subfamily.

The protein localises to the cytoplasm. Its function is as follows. One of the essential components for the initiation of protein synthesis. Protects formylmethionyl-tRNA from spontaneous hydrolysis and promotes its binding to the 30S ribosomal subunits. Also involved in the hydrolysis of GTP during the formation of the 70S ribosomal complex. The polypeptide is Translation initiation factor IF-2 (Stenotrophomonas maltophilia (strain R551-3)).